Here is a 504-residue protein sequence, read N- to C-terminus: Peptidyl-prolyl cis-trans isomerase-like 4 (504 aa).

The PPIase cyclophilin-type domain occupies 1-169; the sequence is MSVMLETSLG…QNIRIRHVEI (169 aa). The RRM domain maps to 246 to 324; that stretch reads NILFVCKLNP…RRIWVDFSQS (79 aa). The span at 330–339 shows a compositional bias: polar residues; that stretch reads RSMLSSSNPT. The tract at residues 330–504 is disordered; it reads RSMLSSSNPT…RERDDRDRRR (175 aa). The segment covering 340–354 has biased composition (gly residues); that stretch reads GRGGRGGRGGRGGNY. Basic and acidic residues-rich tracts occupy residues 356–381 and 416–504; these read GRRD…DSRR and SKRD…DRRR.

This sequence belongs to the cyclophilin-type PPIase family. PPIL4 subfamily.

It localises to the nucleus. It catalyses the reaction [protein]-peptidylproline (omega=180) = [protein]-peptidylproline (omega=0). PPIases accelerate the folding of proteins. It catalyzes the cis-trans isomerization of proline imidic peptide bonds in oligopeptides. This Cryptococcus neoformans var. neoformans serotype D (strain B-3501A) (Filobasidiella neoformans) protein is Peptidyl-prolyl cis-trans isomerase-like 4 (CYP6).